The primary structure comprises 466 residues: Soluble pyridine nucleotide transhydrogenase (466 aa).

36–45 serves as a coordination point for FAD; it reads ERYHNVGGGC.

Belongs to the class-I pyridine nucleotide-disulfide oxidoreductase family. The cofactor is FAD.

It localises to the cytoplasm. It carries out the reaction NAD(+) + NADPH = NADH + NADP(+). In terms of biological role, conversion of NADPH, generated by peripheral catabolic pathways, to NADH, which can enter the respiratory chain for energy generation. This Klebsiella pneumoniae subsp. pneumoniae (strain ATCC 700721 / MGH 78578) protein is Soluble pyridine nucleotide transhydrogenase.